A 514-amino-acid polypeptide reads, in one-letter code: MEDHTVHQTEHMTTIEAHAVSQQVGQVHVATYTEHGMLSADEDSPSSPDDDAYDDSDILNSTGTDEVTAHLAAAGPVGMAAAAAVATGKKRKRPHIFESNPSIRKRQQTRLLRKLRATLDEYTTRVGQQAIVLCISPSKPNPVFRVFGAAPLENVVRKYKSMILEDLENALAEHAPPGGGELSSELPPLTIDGIPVSVDKMTQAQLRAFIPEMLKYSTGRGKPGWGKESCKPIWWPEDIPWANVRSDVRTEEQKQRVSWTQALRTIVKNCYKQHGREDLLYAFEDQVTTQVATTATHSIAHLVPSQTVVQTISNPDGTVSLIQVGTGATVATLADASELPGTVTVAQVNYSTVTDGEVEQNWATLQGGEMTIQTTQASEATQAVASLAEAAVAASQEMQTGATVTMALNRYSLEGALKFGEAAAHAVATLAEATLQGGGQIVLAGETAAAVGALTGVPDGSGLVQIPVSMYQTVVTSLAQGNRPVQVAMAPVTTRIDNTMTLDGQAVEVVTLEQ.

A dimerization region spans residues 1–78 (MEDHTVHQTE…AHLAAAGPVG (78 aa)). The disordered stretch occupies residues 38-61 (LSADEDSPSSPDDDAYDDSDILNS). The segment covering 40 to 57 (ADEDSPSSPDDDAYDDSD) has biased composition (acidic residues). The Nuclear localization signal signature appears at 88-116 (GKKRKRPHIFESNPSIRKRQQTRLLRKLR). Residues 109 to 307 (TRLLRKLRAT…SIAHLVPSQT (199 aa)) mediate DNA binding. A required for transcriptional activation region spans residues 303 to 488 (VPSQTVVQTI…AQGNRPVQVA (186 aa)).

The protein belongs to the NRF1/Ewg family. As to quaternary structure, homodimer. Binds DNA as a dimer.

Its subcellular location is the nucleus. In terms of biological role, probable transcription factor that is required for normal development of the outer retina. The protein is Nuclear respiratory factor 1 (nrf1) of Danio rerio (Zebrafish).